A 497-amino-acid chain; its full sequence is Glycerol kinase (497 aa).

T13 contacts ADP. The ATP site is built by T13, T14, and S15. T13 contacts sn-glycerol 3-phosphate. R17 is a binding site for ADP. Residues R83, E84, and Y135 each contribute to the sn-glycerol 3-phosphate site. Glycerol is bound by residues R83, E84, and Y135. H231 carries the post-translational modification Phosphohistidine; by HPr. D245 is a binding site for sn-glycerol 3-phosphate. Residues D245 and Q246 each contribute to the glycerol site. ADP is bound by residues T267 and G310. ATP contacts are provided by T267, G310, Q314, and G411. ADP is bound by residues G411 and N415.

This sequence belongs to the FGGY kinase family. As to quaternary structure, homotetramer and homodimer (in equilibrium). Post-translationally, the phosphoenolpyruvate-dependent sugar phosphotransferase system (PTS), including enzyme I, and histidine-containing protein (HPr) are required for the phosphorylation, which leads to the activation of the enzyme.

It catalyses the reaction glycerol + ATP = sn-glycerol 3-phosphate + ADP + H(+). Its pathway is polyol metabolism; glycerol degradation via glycerol kinase pathway; sn-glycerol 3-phosphate from glycerol: step 1/1. Activated by phosphorylation and inhibited by fructose 1,6-bisphosphate (FBP). Key enzyme in the regulation of glycerol uptake and metabolism. Catalyzes the phosphorylation of glycerol to yield sn-glycerol 3-phosphate. In Listeria monocytogenes serotype 4a (strain HCC23), this protein is Glycerol kinase.